The following is a 503-amino-acid chain: ATP synthase subunit alpha (503 aa).

ATP is bound at residue Gly-170 to Thr-177.

The protein belongs to the ATPase alpha/beta chains family. In terms of assembly, F-type ATPases have 2 components, CF(1) - the catalytic core - and CF(0) - the membrane proton channel. CF(1) has five subunits: alpha(3), beta(3), gamma(1), delta(1), epsilon(1). CF(0) has three main subunits: a(1), b(2) and c(9-12). The alpha and beta chains form an alternating ring which encloses part of the gamma chain. CF(1) is attached to CF(0) by a central stalk formed by the gamma and epsilon chains, while a peripheral stalk is formed by the delta and b chains.

The protein resides in the cell inner membrane. It carries out the reaction ATP + H2O + 4 H(+)(in) = ADP + phosphate + 5 H(+)(out). Its function is as follows. Produces ATP from ADP in the presence of a proton gradient across the membrane. The alpha chain is a regulatory subunit. The protein is ATP synthase subunit alpha of Helicobacter pylori (strain G27).